A 436-amino-acid chain; its full sequence is Probable transporter MCH1 (436 aa).

The next 7 helical transmembrane spans lie at 27 to 47 (VVAFLISLLSCLVAGSILLFT), 66 to 86 (MISSLSALGMYFCLPVLGYLA), 93 to 113 (LLSLFSIWFFCPSYFVNSYLV), 119 to 139 (SVIGFCVCFCFIGLATSSLYF), 155 to 175 (LAISLPITCYGLSALLGAQIL), 188 to 208 (LEVVFSFFAWLYLVVGIASFV), and 249 to 269 (FVSFVKDPSAWILLVSLILNI). The N-linked (GlcNAc...) asparagine glycan is linked to asparagine 278. 5 helical membrane-spanning segments follow: residues 295–312 (VSIMAASSTGARLLLGVL), 325–345 (LLVVVIVVGVAGQMSETSAIL), 347–367 (GVSYGGMFTIYPTIVASIWGI), 373–393 (TWGSFMVAPALGSVIFSMFYG), and 410–430 (TAGAMIVSCIFVLLAWKIWYA).

Belongs to the major facilitator superfamily.

It localises to the vacuole membrane. Probable transporter. In Candida albicans (strain SC5314 / ATCC MYA-2876) (Yeast), this protein is Probable transporter MCH1 (MCH1).